A 320-amino-acid chain; its full sequence is Cytochrome f (320 aa).

A signal peptide spans 1 to 35 (MQNRNTFSWVKEPINRSISVLIIIYVITQTSISNA). 4 residues coordinate heme: Y36, C56, C59, and H60. Residues 286–306 (VQGLLFFLASVTLAQIFLVLK) traverse the membrane as a helical segment.

The protein belongs to the cytochrome f family. As to quaternary structure, the 4 large subunits of the cytochrome b6-f complex are cytochrome b6, subunit IV (17 kDa polypeptide, petD), cytochrome f and the Rieske protein, while the 4 small subunits are PetG, PetL, PetM and PetN. The complex functions as a dimer. Heme is required as a cofactor.

The protein resides in the plastid. Its subcellular location is the chloroplast thylakoid membrane. Functionally, component of the cytochrome b6-f complex, which mediates electron transfer between photosystem II (PSII) and photosystem I (PSI), cyclic electron flow around PSI, and state transitions. This Piper cenocladum (Ant piper) protein is Cytochrome f.